We begin with the raw amino-acid sequence, 185 residues long: Threonylcarbamoyl-AMP synthase (185 aa).

One can recognise a YrdC-like domain in the interval 3 to 185; that stretch reads EQAPDEVQEI…VDAISGKVLR (183 aa).

It belongs to the SUA5 family. TsaC subfamily.

The protein resides in the cytoplasm. The catalysed reaction is L-threonine + hydrogencarbonate + ATP = L-threonylcarbamoyladenylate + diphosphate + H2O. Required for the formation of a threonylcarbamoyl group on adenosine at position 37 (t(6)A37) in tRNAs that read codons beginning with adenine. Catalyzes the conversion of L-threonine, HCO(3)(-)/CO(2) and ATP to give threonylcarbamoyl-AMP (TC-AMP) as the acyladenylate intermediate, with the release of diphosphate. This Shewanella sediminis (strain HAW-EB3) protein is Threonylcarbamoyl-AMP synthase.